We begin with the raw amino-acid sequence, 179 residues long: Large ribosomal subunit protein uL5 (179 aa).

It belongs to the universal ribosomal protein uL5 family. As to quaternary structure, part of the 50S ribosomal subunit; part of the 5S rRNA/L5/L18/L25 subcomplex. Contacts the 5S rRNA and the P site tRNA. Forms a bridge to the 30S subunit in the 70S ribosome.

This is one of the proteins that bind and probably mediate the attachment of the 5S RNA into the large ribosomal subunit, where it forms part of the central protuberance. In the 70S ribosome it contacts protein S13 of the 30S subunit (bridge B1b), connecting the 2 subunits; this bridge is implicated in subunit movement. Contacts the P site tRNA; the 5S rRNA and some of its associated proteins might help stabilize positioning of ribosome-bound tRNAs. This Shewanella woodyi (strain ATCC 51908 / MS32) protein is Large ribosomal subunit protein uL5.